A 219-amino-acid polypeptide reads, in one-letter code: Deoxyribose-phosphate aldolase (219 aa).

The active-site Proton donor/acceptor is aspartate 89. Lysine 151 (schiff-base intermediate with acetaldehyde) is an active-site residue. Lysine 180 serves as the catalytic Proton donor/acceptor.

The protein belongs to the DeoC/FbaB aldolase family. DeoC type 1 subfamily.

Its subcellular location is the cytoplasm. The catalysed reaction is 2-deoxy-D-ribose 5-phosphate = D-glyceraldehyde 3-phosphate + acetaldehyde. The protein operates within carbohydrate degradation; 2-deoxy-D-ribose 1-phosphate degradation; D-glyceraldehyde 3-phosphate and acetaldehyde from 2-deoxy-alpha-D-ribose 1-phosphate: step 2/2. Functionally, catalyzes a reversible aldol reaction between acetaldehyde and D-glyceraldehyde 3-phosphate to generate 2-deoxy-D-ribose 5-phosphate. This chain is Deoxyribose-phosphate aldolase, found in Coprothermobacter proteolyticus (strain ATCC 35245 / DSM 5265 / OCM 4 / BT).